A 152-amino-acid chain; its full sequence is Endoribonuclease YbeY (152 aa).

Positions 116, 120, and 126 each coordinate Zn(2+).

The protein belongs to the endoribonuclease YbeY family. It depends on Zn(2+) as a cofactor.

The protein localises to the cytoplasm. In terms of biological role, single strand-specific metallo-endoribonuclease involved in late-stage 70S ribosome quality control and in maturation of the 3' terminus of the 16S rRNA. This Mycoplasma mobile (strain ATCC 43663 / 163K / NCTC 11711) (Mesomycoplasma mobile) protein is Endoribonuclease YbeY.